The chain runs to 286 residues: Octanoyltransferase (286 aa).

The BPL/LPL catalytic domain occupies 50–278; sequence LRTPDELWIV…NIAQRHAGVI (229 aa). Substrate is bound by residues 89 to 96, 190 to 192, and 203 to 205; these read RGGQVTWH, SLG, and GVA. Residue cysteine 221 is the Acyl-thioester intermediate of the active site.

It belongs to the LipB family.

It localises to the cytoplasm. It carries out the reaction octanoyl-[ACP] + L-lysyl-[protein] = N(6)-octanoyl-L-lysyl-[protein] + holo-[ACP] + H(+). It participates in protein modification; protein lipoylation via endogenous pathway; protein N(6)-(lipoyl)lysine from octanoyl-[acyl-carrier-protein]: step 1/2. Catalyzes the transfer of endogenously produced octanoic acid from octanoyl-acyl-carrier-protein onto the lipoyl domains of lipoate-dependent enzymes. Lipoyl-ACP can also act as a substrate although octanoyl-ACP is likely to be the physiological substrate. The protein is Octanoyltransferase of Psychrobacter arcticus (strain DSM 17307 / VKM B-2377 / 273-4).